The sequence spans 341 residues: Elongation factor Ts (341 aa).

Residues 80-83 (TDFV) are involved in Mg(2+) ion dislocation from EF-Tu.

It belongs to the EF-Ts family.

The protein resides in the cytoplasm. In terms of biological role, associates with the EF-Tu.GDP complex and induces the exchange of GDP to GTP. It remains bound to the aminoacyl-tRNA.EF-Tu.GTP complex up to the GTP hydrolysis stage on the ribosome. The polypeptide is Elongation factor Ts (Lactobacillus gasseri (strain ATCC 33323 / DSM 20243 / BCRC 14619 / CIP 102991 / JCM 1131 / KCTC 3163 / NCIMB 11718 / NCTC 13722 / AM63)).